Reading from the N-terminus, the 860-residue chain is Nuclear pore complex protein NUP93B (860 aa).

It belongs to the nucleoporin interacting component (NIC) family. Part of the nuclear pore complex (NPC). The NPC has an eight-fold symmetrical structure comprising a central transport channel and two rings, the cytoplasmic and nuclear rings, to which eight filaments are attached. The cytoplasmic filaments have loose ends, while the nuclear filaments are joined in a distal ring, forming a nuclear basket. NPCs are highly dynamic in configuration and composition, and can be devided in 3 subcomplexes, the NUP62 subcomplex, the NUP107-160 subcomplex and the NUP93 subcomplex, containing approximately 30 different nucleoporin proteins.

Its subcellular location is the nucleus envelope. The protein resides in the nucleus. The protein localises to the nuclear pore complex. This Arabidopsis thaliana (Mouse-ear cress) protein is Nuclear pore complex protein NUP93B.